The chain runs to 238 residues: Fish-egg lectin (238 aa).

5 consecutive repeat copies span residues 1 to 34, 35 to 68, 69 to 106, 107 to 156, and 157 to 199. The interval 1–199 is 5 X approximate tandem repeats; the sequence is LDCTVIDGNL…TGVTRSKPDG (199 aa). Disulfide bonds link cysteine 3–cysteine 234, cysteine 100–cysteine 153, cysteine 128–cysteine 133, and cysteine 208–cysteine 226. Asparagine 27 carries N-linked (GlcNAc...) asparagine glycosylation.

Belongs to the tectonin family. In terms of tissue distribution, expressed in the eggs.

It localises to the secreted. In terms of biological role, lipopolysaccharide-binding protein with a very low agglutinating activity for human A-type erythrocytes and interacts with both Gram-positive and Gram-negative bacteria. This Cyprinus carpio (Common carp) protein is Fish-egg lectin.